A 314-amino-acid chain; its full sequence is Ketimine reductase mu-crystallin (314 aa).

Arginine 47 lines the 3,3',5-triiodo-L-thyronine pocket. NADPH-binding residues include aspartate 82, histidine 92, arginine 119, alanine 144, valine 146, glutamine 147, asparagine 168, arginine 169, threonine 170, asparagine 173, threonine 205, leucine 206, valine 226, and alanine 228. 3,3',5-triiodo-L-thyronine is bound at residue glutamate 257. Serine 292 contributes to the NADPH binding site.

This sequence belongs to the ornithine cyclodeaminase/mu-crystallin family. Homodimer. Binds the thyroid hormone triiodothyronine (T3); T3 binding inhibits enzymatic activity. As to expression, expressed in neural tissues, muscle and kidney. Expressed in the inner ear.

The protein resides in the cytoplasm. The enzyme catalyses L-pipecolate + NADP(+) = Delta(1)-piperideine-2-carboxylate + NADPH + H(+). It carries out the reaction L-pipecolate + NAD(+) = Delta(1)-piperideine-2-carboxylate + NADH + H(+). It catalyses the reaction L-proline + NADP(+) = 1-pyrroline-2-carboxylate + NADPH + H(+). The catalysed reaction is L-proline + NAD(+) = 1-pyrroline-2-carboxylate + NADH + H(+). The enzyme catalyses (3R)-1,4-thiomorpholine-3-carboxylate + NAD(+) = 3,4-dehydrothiomorpholine-3-carboxylate + NADH + 2 H(+). It carries out the reaction (3R)-1,4-thiomorpholine-3-carboxylate + NADP(+) = 3,4-dehydrothiomorpholine-3-carboxylate + NADPH + 2 H(+). It catalyses the reaction (S)-cystathionine ketimine + NADH + 2 H(+) = (3R,5S)-2,3,5,6,7-pentahydro-1,4-thiazepine-3,5-dicarboxylate + NAD(+). The catalysed reaction is (S)-cystathionine ketimine + NADPH + 2 H(+) = (3R,5S)-2,3,5,6,7-pentahydro-1,4-thiazepine-3,5-dicarboxylate + NADP(+). The enzyme catalyses (R)-lanthionine ketimine + NADPH + 2 H(+) = (3R,5R)-1,4-thiomorpholine-3,5-dicarboxylate + NADP(+). It carries out the reaction Delta(2)-thiazoline-2-carboxylate + NADPH + 2 H(+) = L-thiazolidine-2-carboxylate + NADP(+). With respect to regulation, inhibited by thyroid hormones triiodothyronine (T3) and thyroxine (T4). Catalyzes the NAD(P)H-dependent reduction of imine double bonds of a number of cyclic ketimine substrates, including sulfur-containing cyclic ketimines. Under physiological conditions, it efficiently catalyzes delta(1)-piperideine-2-carboxylate (P2C) and delta(1)-pyrroline-2-carboxylate (Pyr2C) reduction, suggesting a central role in lysine and glutamate metabolism. Additional substrates are delta(2)-thiazoline-2-carboxylate (T2C), 3,4-dehydrothiomorpholine-3-carboxylate (AECK), and (R)-lanthionine ketimine (LK) that is reduced at very low rate compared to other substrates. Also catalyzes the NAD(P)H-dependent reduction of (S)-cystathionine ketimine (CysK). This Homo sapiens (Human) protein is Ketimine reductase mu-crystallin.